A 306-amino-acid chain; its full sequence is Homoserine O-acetyltransferase (306 aa).

The active-site Acyl-thioester intermediate is the Cys142. Substrate is bound by residues Lys163 and Ser192. His235 serves as the catalytic Proton acceptor. Glu237 is a catalytic residue. Arg249 serves as a coordination point for substrate.

The protein belongs to the MetA family.

It localises to the cytoplasm. The catalysed reaction is L-homoserine + acetyl-CoA = O-acetyl-L-homoserine + CoA. It participates in amino-acid biosynthesis; L-methionine biosynthesis via de novo pathway; O-acetyl-L-homoserine from L-homoserine: step 1/1. Its function is as follows. Transfers an acetyl group from acetyl-CoA to L-homoserine, forming acetyl-L-homoserine. In Clostridium botulinum (strain Eklund 17B / Type B), this protein is Homoserine O-acetyltransferase.